Reading from the N-terminus, the 299-residue chain is Putative arsenical pump-driving ATPase 2 (299 aa).

8–15 (GKGGVGKT) is an ATP binding site.

Belongs to the arsA ATPase family.

The enzyme catalyses arsenite(in) + ATP + H2O = arsenite(out) + ADP + phosphate + H(+). In terms of biological role, anion-transporting ATPase. Catalyzes the extrusion of arsenite. The protein is Putative arsenical pump-driving ATPase 2 (arsA2) of Aquifex aeolicus (strain VF5).